A 92-amino-acid chain; its full sequence is MKWVTVVLSFALVCCQYSLWFGKGSIGRNSSLREQIAVQEEKNQTLALRNHSLAAEVYDLENGQEAISEIARVELGYIQDGETFYRLIRHNR.

Over 1–3 (MKW) the chain is Cytoplasmic. The helical transmembrane segment at 4–21 (VTVVLSFALVCCQYSLWF) threads the bilayer. Residues 22–92 (GKGSIGRNSS…TFYRLIRHNR (71 aa)) lie on the Periplasmic side of the membrane. Positions 28-50 (RNSSLREQIAVQEEKNQTLALRN) form a coiled coil.

This sequence belongs to the FtsB family. Part of a complex composed of FtsB, FtsL and FtsQ.

Its subcellular location is the cell inner membrane. In terms of biological role, essential cell division protein. May link together the upstream cell division proteins, which are predominantly cytoplasmic, with the downstream cell division proteins, which are predominantly periplasmic. This is Cell division protein FtsB from Neisseria meningitidis serogroup C (strain 053442).